A 230-amino-acid chain; its full sequence is Cytochrome c oxidase subunit 2 (230 aa).

Residues 1 to 14 lie on the Mitochondrial intermembrane side of the membrane; the sequence is MAHPSQLGFQDAAS. A helical membrane pass occupies residues 15 to 45; that stretch reads PVMEELLHFHDHTLMIVFLISTLVLYIIMAM. Residues 46-59 are Mitochondrial matrix-facing; sequence VSTKLTNKYILDSQ. A helical membrane pass occupies residues 60–87; it reads EIEIVWTILPAVILIMIALPSLRILYLM. Residues 88 to 230 lie on the Mitochondrial intermembrane side of the membrane; it reads DEINDPHLTI…SWSSLMLEEA (143 aa). 6 residues coordinate Cu cation: His161, Cys196, Glu198, Cys200, His204, and Met207. A Mg(2+)-binding site is contributed by Glu198.

It belongs to the cytochrome c oxidase subunit 2 family. In terms of assembly, component of the cytochrome c oxidase (complex IV, CIV), a multisubunit enzyme composed of 14 subunits. The complex is composed of a catalytic core of 3 subunits MT-CO1, MT-CO2 and MT-CO3, encoded in the mitochondrial DNA, and 11 supernumerary subunits COX4I, COX5A, COX5B, COX6A, COX6B, COX6C, COX7A, COX7B, COX7C, COX8 and NDUFA4, which are encoded in the nuclear genome. The complex exists as a monomer or a dimer and forms supercomplexes (SCs) in the inner mitochondrial membrane with NADH-ubiquinone oxidoreductase (complex I, CI) and ubiquinol-cytochrome c oxidoreductase (cytochrome b-c1 complex, complex III, CIII), resulting in different assemblies (supercomplex SCI(1)III(2)IV(1) and megacomplex MCI(2)III(2)IV(2)). Found in a complex with TMEM177, COA6, COX18, COX20, SCO1 and SCO2. Interacts with TMEM177 in a COX20-dependent manner. Interacts with COX20. Interacts with COX16. Requires Cu cation as cofactor.

It is found in the mitochondrion inner membrane. It catalyses the reaction 4 Fe(II)-[cytochrome c] + O2 + 8 H(+)(in) = 4 Fe(III)-[cytochrome c] + 2 H2O + 4 H(+)(out). Functionally, component of the cytochrome c oxidase, the last enzyme in the mitochondrial electron transport chain which drives oxidative phosphorylation. The respiratory chain contains 3 multisubunit complexes succinate dehydrogenase (complex II, CII), ubiquinol-cytochrome c oxidoreductase (cytochrome b-c1 complex, complex III, CIII) and cytochrome c oxidase (complex IV, CIV), that cooperate to transfer electrons derived from NADH and succinate to molecular oxygen, creating an electrochemical gradient over the inner membrane that drives transmembrane transport and the ATP synthase. Cytochrome c oxidase is the component of the respiratory chain that catalyzes the reduction of oxygen to water. Electrons originating from reduced cytochrome c in the intermembrane space (IMS) are transferred via the dinuclear copper A center (CU(A)) of subunit 2 and heme A of subunit 1 to the active site in subunit 1, a binuclear center (BNC) formed by heme A3 and copper B (CU(B)). The BNC reduces molecular oxygen to 2 water molecules using 4 electrons from cytochrome c in the IMS and 4 protons from the mitochondrial matrix. The chain is Cytochrome c oxidase subunit 2 (MT-CO2) from Squalus acanthias (Spiny dogfish).